A 302-amino-acid chain; its full sequence is Sulfate adenylyltransferase subunit 2 (302 aa).

Residues Arg-280–Phe-302 form a disordered region.

Belongs to the PAPS reductase family. CysD subfamily. As to quaternary structure, heterodimer composed of CysD, the smaller subunit, and CysN.

The enzyme catalyses sulfate + ATP + H(+) = adenosine 5'-phosphosulfate + diphosphate. It participates in sulfur metabolism; hydrogen sulfide biosynthesis; sulfite from sulfate: step 1/3. Functionally, with CysN forms the ATP sulfurylase (ATPS) that catalyzes the adenylation of sulfate producing adenosine 5'-phosphosulfate (APS) and diphosphate, the first enzymatic step in sulfur assimilation pathway. APS synthesis involves the formation of a high-energy phosphoric-sulfuric acid anhydride bond driven by GTP hydrolysis by CysN coupled to ATP hydrolysis by CysD. The polypeptide is Sulfate adenylyltransferase subunit 2 (Shewanella sp. (strain ANA-3)).